The following is a 181-amino-acid chain: Inner membrane-spanning protein YciB (181 aa).

5 helical membrane passes run 8-28 (FPII…ATAA), 53-73 (ITLI…NAIF), 76-96 (WKPT…HFFG), 121-141 (LSWA…VYNF), and 149-169 (FKLF…AFYI).

This sequence belongs to the YciB family.

Its subcellular location is the cell inner membrane. In terms of biological role, plays a role in cell envelope biogenesis, maintenance of cell envelope integrity and membrane homeostasis. The sequence is that of Inner membrane-spanning protein YciB from Coxiella burnetii (strain CbuK_Q154) (Coxiella burnetii (strain Q154)).